Here is a 203-residue protein sequence, read N- to C-terminus: MSSQIKLTKNSYRAEKQKLNLLGMYLPTLKLKKALLQAEVQSAMRSAAESMAANEQARDRMHAFAELFSIPLYTDAVEQCFSIDIFEKDVENIAGVEVPLLKRVVLTSLEYSLLDTPIWIDSLIASAKEYVLSKIYAENAQERLRLLEEELRRVSIRVNLFEKKLIPTTSQTIKKIAIFLSDRSITDVGQMKMAKKKIQQHKE.

The protein belongs to the V-ATPase D subunit family.

Functionally, produces ATP from ADP in the presence of a proton gradient across the membrane. This chain is V-type ATP synthase subunit D (atpD), found in Chlamydia muridarum (strain MoPn / Nigg).